Consider the following 224-residue polypeptide: Protein DCL, chloroplastic (224 aa).

The transit peptide at 1–50 (MASICTSNFHFLCRKNNSSPISHHLLLSPSSLSFSRCGGLRLCRCAAVKT) directs the protein to the chloroplast. The segment at 76 to 98 (TTSESEELVKEESDDEVGKKSGD) is disordered. The segment covering 82 to 98 (ELVKEESDDEVGKKSGD) has biased composition (basic and acidic residues).

The protein resides in the plastid. Its subcellular location is the chloroplast. Its function is as follows. Has a function in the early stage of chloroplast development and palisade cell morphogenesis. Required for correct plastid ribosome assembly. Required for processing and maturation of 4.5S rRNA. The chain is Protein DCL, chloroplastic (DCL) from Solanum lycopersicum (Tomato).